A 528-amino-acid chain; its full sequence is Ivanolysin (528 aa).

Residues 1 to 23 (MKKIMLLLMTLLLVSLPLAQEAQ) form the signal peptide. 4 consecutive transmembrane segments (beta stranded) span residues 213–226 (ESQL…AFKA), 233–242 (VNFGAISEGK), 311–320 (STRVKAAFDT), and 328–340 (KGDT…IQNA). Positions 482–492 (ECTGLAWEWWR) match the Conserved undecapeptide motif. A Cholesterol binding motif is present at residues 514–515 (TL).

Belongs to the cholesterol-dependent cytolysin family. Homooligomeric pore complex of 35 to 50 subunits; when inserted in the host membrane.

It is found in the secreted. The protein localises to the host membrane. Its function is as follows. A cholesterol-dependent toxin that causes cytolysis by forming pores in cholesterol containing host membranes. After binding to target membranes, the protein undergoes a major conformation change, leading to its insertion in the host membrane and formation of an oligomeric pore complex. Cholesterol is required for binding to host membranes, membrane insertion and pore formation; cholesterol binding is mediated by a Thr-Leu pair in the C-terminus. Can be reversibly inactivated by oxidation. In Listeria ivanovii, this protein is Ivanolysin (ilo).